A 345-amino-acid chain; its full sequence is tRNA pseudouridine synthase B (345 aa).

The active-site Nucleophile is D39.

This sequence belongs to the pseudouridine synthase TruB family. Type 1 subfamily.

It carries out the reaction uridine(55) in tRNA = pseudouridine(55) in tRNA. Functionally, responsible for synthesis of pseudouridine from uracil-55 in the psi GC loop of transfer RNAs. The polypeptide is tRNA pseudouridine synthase B (Rickettsia africae (strain ESF-5)).